A 227-amino-acid polypeptide reads, in one-letter code: Ribosomal RNA large subunit methyltransferase E (227 aa).

Residues G78, W80, D103, D119, and D143 each contribute to the S-adenosyl-L-methionine site. Catalysis depends on K183, which acts as the Proton acceptor.

This sequence belongs to the class I-like SAM-binding methyltransferase superfamily. RNA methyltransferase RlmE family.

The protein resides in the cytoplasm. The catalysed reaction is uridine(2552) in 23S rRNA + S-adenosyl-L-methionine = 2'-O-methyluridine(2552) in 23S rRNA + S-adenosyl-L-homocysteine + H(+). Its function is as follows. Specifically methylates the uridine in position 2552 of 23S rRNA at the 2'-O position of the ribose in the fully assembled 50S ribosomal subunit. The sequence is that of Ribosomal RNA large subunit methyltransferase E from Rickettsia peacockii (strain Rustic).